The chain runs to 143 residues: Large ribosomal subunit protein uL16 (143 aa).

Over residues 1-14 (MLTPKRVKWRRQHR) the composition is skewed to basic residues. A disordered region spans residues 1 to 23 (MLTPKRVKWRRQHRPDRAGKAKG).

This sequence belongs to the universal ribosomal protein uL16 family. In terms of assembly, part of the 50S ribosomal subunit.

Functionally, binds 23S rRNA and is also seen to make contacts with the A and possibly P site tRNAs. The polypeptide is Large ribosomal subunit protein uL16 (Desulforudis audaxviator (strain MP104C)).